Consider the following 57-residue polypeptide: Small ribosomal subunit protein bS21 (57 aa).

Belongs to the bacterial ribosomal protein bS21 family.

The sequence is that of Small ribosomal subunit protein bS21 from Bacillus anthracis (strain A0248).